A 1346-amino-acid chain; its full sequence is Pikromycin polyketide synthase component PikAIV (1346 aa).

A coiled-coil region spans residues 3–32; that stretch reads SSNEQLVDALRASLKENEELRKESRRRADR. The region spanning 34 to 461 is the Ketosynthase family 3 (KS3) domain; it reads QEPMAIVGMS…GTNAHVVLEE (428 aa). The module 6 stretch occupies residues 37–1332; the sequence is MAIVGMSCRF…HAPAVAEAVL (1296 aa). Catalysis depends on for beta-ketoacyl synthase activity residues Cys207, His342, and His382. Positions 562-844 are acyltransferase; it reads FVFPGQGTQW…VLTMTLPDKV (283 aa). The Acyl-ester intermediate; for acyltransferase activity role is filled by Ser652. The Carrier domain maps to 945–1020; the sequence is SAVLAMVMRQ…ALAERISDEL (76 aa). Ser980 bears the O-(pantetheine 4'-phosphoryl)serine mark. The interval 1028–1050 is disordered; it reads AEPSDHEQAEEEKAAAPAGARSG. The segment covering 1030–1041 has biased composition (basic and acidic residues); that stretch reads PSDHEQAEEEKA. Thr1125 provides a ligand contact to substrate. The tract at residues 1127 to 1332 is thioesterase; the sequence is ANGGPHEFLR…HAPAVAEAVL (206 aa). Ser1196 functions as the Nucleophile; for thioesterase activity in the catalytic mechanism. Gly1197 and Asp1224 together coordinate substrate. His1316 acts as the Proton acceptor; for thioesterase activity in catalysis.

Homodimer. Pikromycin PKS consists of a combination of multimodular (PikAI and PikAII) and monomodular (PikAIII and PikAIV) polypeptides each coding for a functional synthase subunit which participates in 1 (monomodular) or 2 (multimodular) of the six FAS-like elongation steps required for formation of the polyketide. Module 1, 2, 3, 4, 5, and 6 participating in biosynthesis steps 1, 2, 3, 4, 5, and 6, respectively. Pantetheine 4'-phosphate serves as cofactor.

The enzyme catalyses 5 (S)-methylmalonyl-CoA + malonyl-CoA + 5 NADPH + 11 H(+) = 10-deoxymethynolide + 6 CO2 + 5 NADP(+) + 6 CoA + 2 H2O. It catalyses the reaction 6 (S)-methylmalonyl-CoA + malonyl-CoA + 5 NADPH + 12 H(+) = narbonolide + 7 CO2 + 5 NADP(+) + 7 CoA + 2 H2O. The protein operates within antibiotic biosynthesis. With respect to regulation, irreversibly inhibited by (2S,3R,4S)-2,4-dihydroxy-3-methylhexyl-phosphonic acid and (3R,4S)-4-hydroxy-3-methyl-2-oxohexyl-phosphonic acid. Involved in the biosynthesis of 12- and 14-membered ring macrolactone antibiotics such as methymycin and neomethymycin, and pikromycin and narbomycin, respectively. Component of the pikromycin PKS which catalyzes the biosynthesis of both precursors 10-deoxymethynolide (12-membered ring macrolactone) and narbonolide (14-membered ring macrolactone). Chain elongation through PikAI, PikAII and PikAIII followed by thioesterase catalyzed termination results in the production of 10-deoxymethynolide, while continued elongation through PikAIV, followed by thioesterase (TE) catalyzed cyclization results in the biosynthesis of the narbonolide. The thioesterase can use a series of diketide-N-acetylcysteamine (SNAC) thioesters, but has a strong preference for the 2-methyl-3-ketopentanoyl-SNAC over the stereoisomers of 2-methyl-3-hydroxyacyl-SNAC. In Streptomyces venezuelae, this protein is Pikromycin polyketide synthase component PikAIV.